The chain runs to 1051 residues: MSSAVEPPPPPPPESAPSKPSAAGAGGSSSGNKGGPEGGAAPAAPCAAGSGPADTEMEEVFDHGSPGKQKEIQEPDPTYEEKMQTDRANRFEYLLKQTELFAHFIQPAAQKTPTSPLKMKPGRPRVKKDEKQNLLSVGDYRHRRTEQEEDEELLTESSKATNVCTRFEDSPSYVKWGKLRDYQVRGLNWLISLYENGINGILADEMGLGKTLQTISLLGYMKHYRNIPGPHMVLVPKSTLHNWMSEFKKWVPTLRSVCLIGDKEQRAAFVRDVLLPGEWDVCVTSYEMLIKEKSVFKKFNWRYLVIDEAHRIKNEKSKLSEIVREFKTTNRLLLTGTPLQNNLHELWSLLNFLLPDVFNSADDFDSWFDTNNCLGDQKLVERLHMVLRPFLLRRIKADVEKSLPPKKEVKIYVGLSKMQREWYTRILMKDIDILNSAGKMDKMRLLNILMQLRKCCNHPYLFDGAEPGPPYTTDMHLVTNSGKMVVLDKLLPKLKEQGSRVLIFSQMTRVLDILEDYCMWRNYEYCRLDGQTPHDERQDSINAYNEPNSTKFVFMLSTRAGGLGINLATADVVILYDSDWNPQVDLQAMDRAHRIGQTKTVRVFRFITDNTVEERIVERAEMKLRLDSIVIQQGRLVDQNLNKIGKDEMLQMIRHGATHVFASKESEITDEDIDGILERGAKKTAEMNEKLSKMGESSLRNFTMDTESSVYNFEGEDYREKQKIAFTEWIEPPKRERKANYAVDAYFREALRVSEPKAPKAPRPPKQPNVQDFQFFPPRLFELLEKEILYYRKTIGYKVPRSPDLPNAAQAQKEEQLKIDEAEPLNDEELEEKEKLLTQGFTNWNKRDFNQFIKANEKWGRDDIENIAREVEGKTPEEVIEYSAVFWERCNELQDIEKIMAQIERGEARIQRRISIKKALDTKIGRYKAPFHQLRISYGTNKGKNYTEEEDRFLICMLHKLGFDKENVYDELRQCIRNSPQFRFDWFLKSRTAMELQRRCNTLITLIERENMELEEKEKAEKKKRGPKPSTQKRKMDGAPDGRGRKKKLKL.

The segment covering 1–15 has biased composition (pro residues); sequence MSSAVEPPPPPPPES. The tract at residues 1 to 81 is disordered; the sequence is MSSAVEPPPP…IQEPDPTYEE (81 aa). Residue Ser-2 is modified to N-acetylserine. A compositionally biased stretch (gly residues) spans 24 to 38; the sequence is GAGGSSSGNKGGPEG. Residues 39-53 show a composition bias toward low complexity; sequence GAAPAAPCAAGSGPA. Thr-55 is subject to Phosphothreonine. Phosphoserine is present on Ser-65. The span at 68–81 shows a compositional bias: basic and acidic residues; sequence KQKEIQEPDPTYEE. Lys-82 is covalently cross-linked (Glycyl lysine isopeptide (Lys-Gly) (interchain with G-Cter in SUMO2)). A Phosphothreonine modification is found at Thr-112. A phosphoserine mark is found at Ser-115, Ser-136, and Ser-170. In terms of domain architecture, Helicase ATP-binding spans 191–356; that stretch reads ISLYENGING…WSLLNFLLPD (166 aa). Residue 204–211 coordinates ATP; the sequence is DEMGLGKT. Residues 307-310 carry the DEAH box motif; it reads DEAH. Position 439 is an N6-acetyllysine (Lys-439). A Helicase C-terminal domain is found at 486-637; it reads VLDKLLPKLK…SIVIQQGRLV (152 aa). Residues Lys-643, Lys-646, Lys-693, Lys-721, and Lys-734 each participate in a glycyl lysine isopeptide (Lys-Gly) (interchain with G-Cter in SUMO2) cross-link. The residue at position 754 (Ser-754) is a Phosphoserine. 2 consecutive SANT domains span residues 839–891 and 942–1006; these read QGFT…ERCN and KGKN…LITL. Lys-965 is covalently cross-linked (Glycyl lysine isopeptide (Lys-Gly) (interchain with G-Cter in SUMO2)). Residues 1014–1051 form a disordered region; sequence LEEKEKAEKKKRGPKPSTQKRKMDGAPDGRGRKKKLKL. Basic residues predominate over residues 1022 to 1033; the sequence is KKKRGPKPSTQK. Residues 1034 to 1043 are compositionally biased toward basic and acidic residues; that stretch reads RKMDGAPDGR.

This sequence belongs to the SNF2/RAD54 helicase family. ISWI subfamily. As to quaternary structure, component of the ACF-5 ISWI chromatin-remodeling complex (also called the ACF/WCRF complex) at least composed of SMARCA5/SNF2H and BAZ1A/ACF1, which regulates the spacing of histone octamers on the DNA template to facilitate access to DNA. Within the complex interacts with BAZ1A/ACF1; the interaction is direct and is required to slide nucleosomes from end to center positions on a DNA template in an ATP-dependent manner. Component of the CHRAC ISWI chromatin-remodeling complex at least composed of SMARCA5/SNF2H, BAZ1A/ACF1, CHRAC1 and POLE3; the complex preferentially binds DNA through the CHRAC1-POLE3 heterodimer and possesses ATP-dependent nucleosome-remodeling activity. Within the complex interacts with BAZ1A/ACF1; the interaction is direct and promotes the interaction with the POLE3-CHRAC1 heterodimer. Within the complex interacts with the POLE3-CHRAC1 heterodimer; the interaction is direct and enhances nucleosome sliding activity by the SMARCA5/SNF2H and BAZ1A/ACF1 interaction. Neither POLE3 nor CHRAC1 enhances nucleosome sliding activity of the ACF-5 ISWI chromatin remodeling complex. Component of the WICH-5 ISWI chromatin-remodeling complex (also called the WICH complex) at least composed of SMARCA5/SNF2H and BAZ1B/WSTF, which regulates the spacing of histone octamers on the DNA template to facilitate access to DNA. Within the complex interacts with BAZ1B/WSTF. Component of the NoRC-5 ISWI chromatin-remodeling complex (also called the NoRC chromatin-remodeling complex) at least composed of SMARCA5/SNF2H and BAZ2A/TIP5; the complex suppresses rDNA transcription by a combination of nucleosome remodeling, histone deacetylation, and DNA methylation. Within the complex interacts with BAZ2A/TIP5. Within the complex interacts with HDAC1. Component of the BRF-5 ISWI chromatin-remodeling complex at least composed of SMARCA5/SNF2H and BAZ2B. Within the complex interacts with BAZ2B. Component of the NURF-5 ISWI chromatin-remodeling complex at least composed of SMARCA5/SNF2H and BPTF. Within the complex interacts with BPFT. Component of the CERF-5 ISWI chromatin-remodeling complex at least composed of SMARCA5/SNF2H and CECR2. LUZP1 is detected as part of the CERF-5 complex in embryonic stem cells where it is involved in complex stabilization but is not detected in the complex in the testis. Component of the RSF-5 ISWI chromatin-remodeling complex (also called the RSF complex) at least composed of SMARCA5/SNF2H and RSF1. Within the complex interacts with RSF1. Interacts with the cohesin complex component RAD21; the interaction is direct. Interacts with the NuRD complex components HDAC2, RBBP4 and CHD4; the interactions are direct. Interacts with PCNA. Component of the B-WICH complex, at least composed of SMARCA5/SNF2H, BAZ1B/WSTF, SF3B1, DEK, MYO1C, ERCC6, MYBBP1A and DDX21 which positively regulates RNA polymerase III transcription. Interacts with MYO1C. Interacts with BEND3. Interacts with SIRT6; promoting recruitment to DNA damage sites. In terms of tissue distribution, ubiquitously expressed.

The protein resides in the nucleus. It localises to the chromosome. It catalyses the reaction ATP + H2O = ADP + phosphate + H(+). Its function is as follows. ATPase that possesses intrinsic ATP-dependent nucleosome-remodeling activity. Catalytic subunit of ISWI chromatin-remodeling complexes, which form ordered nucleosome arrays on chromatin and facilitate access to DNA during DNA-templated processes such as DNA replication, transcription, and repair; this may require intact histone H4 tails. Within the ISWI chromatin-remodeling complexes, slides edge- and center-positioned histone octamers away from their original location on the DNA template. Catalytic activity and histone octamer sliding propensity is regulated and determined by components of the ISWI chromatin-remodeling complexes. The BAZ1A/ACF1-, BAZ1B/WSTF-, BAZ2A/TIP5- and BAZ2B-containing ISWI chromatin-remodeling complexes regulate the spacing of nucleosomes along the chromatin and have the ability to slide mononucleosomes to the center of a DNA template in an ATP-dependent manner. The CECR2- and RSF1-containing ISWI chromatin-remodeling complexes do not have the ability to slide mononucleosomes to the center of a DNA template. Binds to core histones together with RSF1, and is required for the assembly of regular nucleosome arrays by the RSF-5 ISWI chromatin-remodeling complex. Involved in DNA replication and together with BAZ1A/ACF1 is required for replication of pericentric heterochromatin in S-phase. Probably plays a role in repression of RNA polymerase I dependent transcription of the rDNA locus, through the recruitment of the SIN3/HDAC1 corepressor complex to the rDNA promoter. The WICH-5 ISWI chromatin-remodeling complex regulates the transcription of various genes, has a role in RNA polymerase I and RNA polymerase III transcription, mediates the histone H2AX phosphorylation at 'Tyr-142', and is involved in the maintenance of chromatin structures during DNA replication processes. Essential component of the NoRC-5 ISWI chromatin-remodeling complex, a complex that mediates silencing of a fraction of rDNA by recruiting histone-modifying enzymes and DNA methyltransferases, leading to heterochromatin formation and transcriptional silencing. Required for embryonic development and differentiation, and the proliferation of early blastocyst-derived stem cells. The protein is SWI/SNF-related matrix-associated actin-dependent regulator of chromatin subfamily A member 5 (Smarca5) of Mus musculus (Mouse).